Reading from the N-terminus, the 132-residue chain is Large ribosomal subunit protein bL17 (132 aa).

Belongs to the bacterial ribosomal protein bL17 family. As to quaternary structure, part of the 50S ribosomal subunit. Contacts protein L32.

This Ehrlichia canis (strain Jake) protein is Large ribosomal subunit protein bL17.